Reading from the N-terminus, the 56-residue chain is Ovomucoid (56 aa).

One can recognise a Kazal-like domain in the interval 6–56; it reads VDCSEYPKPACMSEYRPLCGSDNKTYVNKCNFCNAVVESNGTLTLSHFGKC. 3 disulfide bridges follow: Cys-8/Cys-38, Cys-16/Cys-35, and Cys-24/Cys-56. Residue Asn-45 is glycosylated (N-linked (GlcNAc...) asparagine).

The protein resides in the secreted. The polypeptide is Ovomucoid (Colinus virginianus (Northern bobwhite)).